A 345-amino-acid polypeptide reads, in one-letter code: tRNA N6-adenosine threonylcarbamoyltransferase (345 aa).

Fe cation-binding residues include His115 and His119. Substrate-binding positions include 137–141 (LVSGG), Asp170, Gly183, Asp187, and Asn276. Asp306 provides a ligand contact to Fe cation.

It belongs to the KAE1 / TsaD family. Requires Fe(2+) as cofactor.

The protein localises to the cytoplasm. It catalyses the reaction L-threonylcarbamoyladenylate + adenosine(37) in tRNA = N(6)-L-threonylcarbamoyladenosine(37) in tRNA + AMP + H(+). Its function is as follows. Required for the formation of a threonylcarbamoyl group on adenosine at position 37 (t(6)A37) in tRNAs that read codons beginning with adenine. Is involved in the transfer of the threonylcarbamoyl moiety of threonylcarbamoyl-AMP (TC-AMP) to the N6 group of A37, together with TsaE and TsaB. TsaD likely plays a direct catalytic role in this reaction. This chain is tRNA N6-adenosine threonylcarbamoyltransferase, found in Pediococcus pentosaceus (strain ATCC 25745 / CCUG 21536 / LMG 10740 / 183-1w).